The chain runs to 429 residues: Glutamate-1-semialdehyde 2,1-aminomutase (429 aa).

The residue at position 267 (Lys-267) is an N6-(pyridoxal phosphate)lysine.

It belongs to the class-III pyridoxal-phosphate-dependent aminotransferase family. HemL subfamily. Homodimer. It depends on pyridoxal 5'-phosphate as a cofactor.

The protein resides in the cytoplasm. The catalysed reaction is (S)-4-amino-5-oxopentanoate = 5-aminolevulinate. The protein operates within porphyrin-containing compound metabolism; protoporphyrin-IX biosynthesis; 5-aminolevulinate from L-glutamyl-tRNA(Glu): step 2/2. The protein is Glutamate-1-semialdehyde 2,1-aminomutase of Xanthomonas oryzae pv. oryzae (strain MAFF 311018).